Reading from the N-terminus, the 397-residue chain is Alpha-2B adrenergic receptor (397 aa).

The helical transmembrane segment at 1–25 (AIAAIIIFLILFTIFGNALVILAVL) threads the bilayer. The Cytoplasmic segment spans residues 26–36 (TSRSLRAPQNL). Residues 37–62 (FLVSLAAADILVATLIIPFSLANELL) form a helical membrane-spanning segment. At 63-72 (GYWYFRRMWC) the chain is on the extracellular side. Cysteines 72 and 151 form a disulfide. The helical transmembrane segment at 73 to 95 (KVYLALDVLFCTSSIVHLCAISL) threads the bilayer. The Cytoplasmic segment spans residues 96–117 (DRYWAVSRALEYNSKRTPRRIK). A helical membrane pass occupies residues 118-140 (CIILMVWLIAAVISLPSLVYKGD). The Extracellular portion of the chain corresponds to 141 to 156 (QGPQPSGAPQCNLNQE). Residues 157-180 (TWYILASSIGSFFAPCLIMILVYL) form a helical membrane-spanning segment. Residues 181-361 (RIYLIAKRSH…LSREKRFTFV (181 aa)) lie on the Cytoplasmic side of the membrane. Disordered stretches follow at residues 193–212 (GPRA…RQVP) and 230–319 (AAGE…LQQP). A compositionally biased stretch (acidic residues) spans 280 to 300 (SLEEEAEEEEEGEEEREEECE). Residues 301-319 (PQALPASPASACSPPLQQP) show a composition bias toward low complexity. Residues 362 to 385 (LAVVIGVFVLCWFPFFFSYSLGAI) form a helical membrane-spanning segment. The Extracellular portion of the chain corresponds to 386 to 394 (CPQQCKVPH). Residues 395-397 (DLF) traverse the membrane as a helical segment.

This sequence belongs to the G-protein coupled receptor 1 family. Adrenergic receptor subfamily. ADRA2B sub-subfamily. Interacts with RAB26. Interacts with PPP1R9B.

It localises to the cell membrane. Its function is as follows. Alpha-2 adrenergic receptors mediate the catecholamine-induced inhibition of adenylate cyclase through the action of G proteins. This chain is Alpha-2B adrenergic receptor (ADRA2B), found in Talpa europaea (European mole).